A 523-amino-acid polypeptide reads, in one-letter code: MAEPKTKYDRQLRIWGELGQSALETASICLLNCGPTGSEALKNLVIGGIGSITIVDGSKVEIGDLGNNFMVDAKSVGQSRAKTVCGFLQELNDSVKANFVEENPDTLISTDPSFFSQFTLVIATQLVEDSMVKLDRICREANVMLVLARSYGLTGFVRISVKEHTAIETKPDHSLDDLRLNSPWPELKSYVESIDLNVEEPAAHKHIPYVVILVKVAEEWAQHHSGNLPSTREEKNEFKDLVKSKMVSADEENYKEALLAAFKVFAPTGISQEIQDINHDSCAEVGSNSSDFWVMVAALKEFISNEGGGEVPLEGSMPDMISSTEHYINLQKIYHSKAEADFLSMEQRVKSILVKVGQDPSSISKPTIKSFCKNARKLKVCRYRTIEDEFKSPSTTELHKYLADENYSGAIGFYILLRAVDRFAGTYKKFPGQFDGSTDEDASQLKTIALSLLSEMGCDGYELQEELYNEMCRFGAAEIHVVAALIGGITSQEVIKLITKQFVPKRGTFIFNGIDHKSQSLTL.

Belongs to the ubiquitin-activating E1 family. ULA1 subfamily. Heterodimer of ECR1 and AXL1. The complex binds to RUB1/NEDD8 and RCE1.

The protein localises to the nucleus. It participates in protein modification; protein neddylation. Its function is as follows. Regulatory subunit of the dimeric ECR1-AXL1 E1 enzyme. E1 activates RUB1/NEDD8 by first adenylating its C-terminal glycine residue with ATP, thereafter linking this residue to the side chain of the catalytic cysteine, yielding a RUB1-ECR1 thioester and free AMP. E1 finally transfers RUB1 to the catalytic cysteine of RCE1. May function redundantly with AXR1 in the RUB conjugating pathway. Seems not to be functionally equivalent to AXR1 in vivo. In Arabidopsis thaliana (Mouse-ear cress), this protein is NEDD8-activating enzyme E1 regulatory subunit AXL.